The sequence spans 316 residues: uncharacterized protein (316 aa).

The region spanning Glu-26–Ala-98 is the S4 RNA-binding domain. Residue Asp-148 is part of the active site.

Belongs to the pseudouridine synthase RluA family.

It carries out the reaction a uridine in RNA = a pseudouridine in RNA. This is an uncharacterized protein from Chloroflexus aurantiacus (strain ATCC 29366 / DSM 635 / J-10-fl).